An 82-amino-acid chain; its full sequence is Acyl carrier protein (82 aa).

Residues 4–79 (PEMEERLRKI…DALNYLETHQ (76 aa)) form the Carrier domain. Serine 39 bears the O-(pantetheine 4'-phosphoryl)serine mark.

This sequence belongs to the acyl carrier protein (ACP) family. 4'-phosphopantetheine is transferred from CoA to a specific serine of apo-ACP by AcpS. This modification is essential for activity because fatty acids are bound in thioester linkage to the sulfhydryl of the prosthetic group.

The protein resides in the cytoplasm. Its pathway is lipid metabolism; fatty acid biosynthesis. In terms of biological role, carrier of the growing fatty acid chain in fatty acid biosynthesis. This is Acyl carrier protein from Chloroflexus aurantiacus (strain ATCC 29366 / DSM 635 / J-10-fl).